The following is a 380-amino-acid chain: MKYADEFRDKEIALGLAKAIRAEADPRKPYRFMEFCGGHTHAISRYGLEDMLPKNVRMIHGPGCPVCVLPAGRIDMAIRLAERPDIILCVYGDLMRVPGSQGASLLKAKARGADIRMVYSTIDAIRIAEDNPGREVVFFAIGFETTTPPTAVMIRLAGKKQLENFSVFCNHVLTPPAMQNILESPDIRNIGRVEIDGFVGPAHVSTIIGTAPYEFFAEEFGKPVVIAGFEPLDMMQAILMLVRQVNEHRHEVENQYSRAVSRDGNLRAKEEVSDIFELRDQFEWRGLGQVPYSGLKLKRAYAKYDAEVRFDMNELRVDDNPACECGAILRGVKKPVDCKLFGTVCTPETPMGSCMVSSEGACAAHWTYGRFRDHQQRRAS.

Residues Cys-36, Cys-64, and Cys-67 each contribute to the Fe cation site.

This sequence belongs to the HypD family. The cofactor is [4Fe-4S] cluster.

It functions in the pathway protein modification; [NiFe] hydrogenase maturation. In terms of biological role, involved in the maturation of [NiFe] hydrogenases. Involved in the biosynthesis of the Fe(CN)(2)CO cofactor. The chain is Hydrogenase maturation factor HypD2 (hypD2) from Bradyrhizobium diazoefficiens (strain JCM 10833 / BCRC 13528 / IAM 13628 / NBRC 14792 / USDA 110).